Consider the following 283-residue polypeptide: Malonyl-[acyl-carrier protein] O-methyltransferase (283 aa).

The protein belongs to the methyltransferase superfamily.

The enzyme catalyses malonyl-[ACP] + S-adenosyl-L-methionine = malonyl-[ACP] methyl ester + S-adenosyl-L-homocysteine. Its pathway is cofactor biosynthesis; biotin biosynthesis. Converts the free carboxyl group of a malonyl-thioester to its methyl ester by transfer of a methyl group from S-adenosyl-L-methionine (SAM). It allows to synthesize pimeloyl-ACP via the fatty acid synthetic pathway. This Acetivibrio thermocellus (strain ATCC 27405 / DSM 1237 / JCM 9322 / NBRC 103400 / NCIMB 10682 / NRRL B-4536 / VPI 7372) (Clostridium thermocellum) protein is Malonyl-[acyl-carrier protein] O-methyltransferase.